The following is a 152-amino-acid chain: Protein SprT-like (152 aa).

A SprT-like domain is found at 6-151 (LQQLVCRISL…SKCLGKLELL (146 aa)). H67 contributes to the Zn(2+) binding site. E68 is an active-site residue. Residue H71 participates in Zn(2+) binding.

This sequence belongs to the SprT family. The cofactor is Zn(2+).

Its subcellular location is the cytoplasm. This chain is Protein SprT-like, found in Lysinibacillus sphaericus (strain C3-41).